We begin with the raw amino-acid sequence, 64 residues long: Chromatin protein Cren7 (64 aa).

The protein belongs to the Cren7 family. As to quaternary structure, monomer. In terms of processing, methylated at multiple sites, to varying extents.

The protein resides in the chromosome. The protein localises to the cytoplasm. In terms of biological role, a chromatin protein, binds double-stranded DNA without sequence specificity. Constrains negative DNA supercoils. The polypeptide is Chromatin protein Cren7 (Aeropyrum pernix (strain ATCC 700893 / DSM 11879 / JCM 9820 / NBRC 100138 / K1)).